A 177-amino-acid chain; its full sequence is Large ribosomal subunit protein uL6 (177 aa).

This sequence belongs to the universal ribosomal protein uL6 family. Part of the 50S ribosomal subunit.

This protein binds to the 23S rRNA, and is important in its secondary structure. It is located near the subunit interface in the base of the L7/L12 stalk, and near the tRNA binding site of the peptidyltransferase center. The sequence is that of Large ribosomal subunit protein uL6 from Vibrio cholerae serotype O1 (strain ATCC 39541 / Classical Ogawa 395 / O395).